Here is a 997-residue protein sequence, read N- to C-terminus: Autophagy-related protein 9 (997 aa).

The Cytoplasmic portion of the chain corresponds to 1 to 318 (MERDEYQLPN…DVYNYYLGNG (318 aa)). Ser19 is modified (phosphoserine). Residues 29–39 (VNPSLNSQEMS) are compositionally biased toward polar residues. Residues 29–88 (VNPSLNSQEMSNFPLPDIERGSSLLHSTNDSREDVDENDLRVPESDQGTSTEEEDEVDEE) are disordered. A compositionally biased stretch (acidic residues) spans 79–88 (TEEEDEVDEE). Glycyl lysine isopeptide (Lys-Gly) (interchain with G-Cter in ubiquitin) cross-links involve residues Lys113 and Lys121. Phosphoserine is present on Ser122. Disordered stretches follow at residues 127 to 159 (LVEG…DGFD) and 214 to 234 (HHDK…NQKH). Lys138 is covalently cross-linked (Glycyl lysine isopeptide (Lys-Gly) (interchain with G-Cter in ubiquitin)). Ser143 and Ser144 each carry phosphoserine. The span at 144-159 (SEEEEDNEFINNDGFD) shows a compositional bias: acidic residues. Positions 221–233 (ANNGPRNINGNQK) are enriched in polar residues. Residues 319–339 (FYCIILEKILNICTLLFVVFV) form a helical membrane-spanning segment. Residues 340-376 (STYMGHCVDYSKLPTSHRVSDIIIDKCYSNSITGFTK) are Lumenal-facing. The helical transmembrane segment at 377–397 (FFLWMFYFFVILKIVQLYFDV) threads the bilayer. Over 398–538 (QKLSELQNFY…EELQKRFMLA (141 aa)) the chain is Cytoplasmic. Residues 539–559 (GFLNIILAPFLVTYFVLLYFF) lie within the membrane without spanning it. At 560 to 620 (RYFNEYKTSP…DQFPKEKTNL (61 aa)) the chain is on the cytoplasmic side. Residues 621–641 (FLKFVSFICGSFVAILAFLTV) traverse the membrane as a helical segment. The Lumenal segment spans residues 642–656 (FDPENFLNFEITSDR). Ser657 carries the post-translational modification Phosphoserine. The chain crosses the membrane as a helical span at residues 657 to 677 (SVIFYITILGAIWSVSRNTIT). Topologically, residues 678–723 (QEYHVFDPEETLKELYEYTHYLPKEWEGRYHKEEIKLEFCKLYNLR) are cytoplasmic. A Glycyl lysine isopeptide (Lys-Gly) (interchain with G-Cter in ubiquitin) cross-link involves residue Lys701. The stretch at 724–744 (IVILLRELTSLMITPFVLWFS) is an intramembrane region. At 745–997 (LPSSAGRIVD…EYYKKSDVGR (253 aa)) the chain is on the cytoplasmic side. 2 positions are modified to phosphoserine: Ser787 and Ser792. Thr794 bears the Phosphothreonine mark. Ser802 carries the post-translational modification Phosphoserine. Thr804 carries the post-translational modification Phosphothreonine. Residues Ser831, Ser842, Ser864, Ser948, and Ser969 each carry the phosphoserine modification.

The protein belongs to the ATG9 family. In terms of assembly, homotrimer; forms a homotrimer with a central pore that forms a path between the two membrane leaflets. Interacts with ATG23 and ATG27 to form a cycling complex for trafficking to the PAS. Interacts (via N-terminus) with ATG11, required for recruitment of ATG9 to the PAS for the Cvt pathway during nutrient-rich conditions. Interacts (via N-terminus) with ATG17; required for recruitment to the PAS during autophagy and starved conditions. Interacts with ATG2 and ATG18; required for the retrieval of ATG9 from the PAS to the cytoplasmic pool. Interacts with ATG41. Interacts with the conserved oligomeric Golgi (COG) complex subunits COG3 and COG4. Interacts with TRS85. In terms of processing, phosphorylated by ATG1; phosphorylation is required for autophagy and cytoplasm to vacuole transport (Cvt) vesicle formation. Phosphorylation by ATG1 regulates ATG18 interaction and preautophagosome elongation. Phosphorylation at Ser-122 is required for selective autophagy by regulating anterograde trafficking and interaction with ATG23 and ATG27. Phosphorylation at Ser-122 prevents ubiquitination by the SCF(MET30) complex. Ubiquitinated by the SCF(MET30) complex in normal conditions, leading to its degradation by the proteasome, thereby preventing inappropriate induction of autophagy. Ubiquitination by the SCF(MET30) complex is prevented by phosphorylation at Ser-122.

It is found in the preautophagosomal structure membrane. It localises to the cytoplasmic vesicle membrane. The protein localises to the golgi apparatus membrane. The protein resides in the endoplasmic reticulum membrane. Its subcellular location is the mitochondrion membrane. It catalyses the reaction a 1,2-diacyl-sn-glycero-3-phosphocholine(in) = a 1,2-diacyl-sn-glycero-3-phosphocholine(out). The catalysed reaction is a 1,2-diacyl-sn-glycero-3-phospho-L-serine(in) = a 1,2-diacyl-sn-glycero-3-phospho-L-serine(out). The enzyme catalyses a 1,2-diacyl-sn-glycero-3-phosphoethanolamine(in) = a 1,2-diacyl-sn-glycero-3-phosphoethanolamine(out). It carries out the reaction a 1,2-diacyl-sn-glycero-3-phospho-(1D-myo-inositol-3-phosphate)(in) = a 1,2-diacyl-sn-glycero-3-phospho-(1D-myo-inositol-3-phosphate)(out). In terms of biological role, phospholipid scramblase involved in autophagy and cytoplasm to vacuole transport (Cvt) vesicle formation. Cycles between the preautophagosomal structure/phagophore assembly site (PAS) and the cytoplasmic vesicle pool and supplies membrane for the growing autophagosome. Lipid scramblase activity plays a key role in preautophagosomal structure/phagophore assembly by distributing the phospholipids that arrive through ATG2 from the cytoplasmic to the luminal leaflet of the bilayer, thereby driving autophagosomal membrane expansion. Required for mitophagy. Also involved in endoplasmic reticulum-specific autophagic process and is essential for the survival of cells subjected to severe ER stress. Different machineries are required for anterograde trafficking to the PAS during either the Cvt pathway or bulk autophagy and for retrograde trafficking. Recruits vesicle-tethering proteins TRS85 and YPT1 to the autophagosome formation site. Also recruits ATG23 and ATG8 to the PAS. The sequence is that of Autophagy-related protein 9 from Saccharomyces cerevisiae (strain YJM789) (Baker's yeast).